The chain runs to 272 residues: GTP cyclohydrolase FolE2 (272 aa).

It belongs to the GTP cyclohydrolase IV family.

It carries out the reaction GTP + H2O = 7,8-dihydroneopterin 3'-triphosphate + formate + H(+). It functions in the pathway cofactor biosynthesis; 7,8-dihydroneopterin triphosphate biosynthesis; 7,8-dihydroneopterin triphosphate from GTP: step 1/1. Converts GTP to 7,8-dihydroneopterin triphosphate. The protein is GTP cyclohydrolase FolE2 of Polynucleobacter asymbioticus (strain DSM 18221 / CIP 109841 / QLW-P1DMWA-1) (Polynucleobacter necessarius subsp. asymbioticus).